Reading from the N-terminus, the 123-residue chain is Large ribosomal subunit protein bL12 (123 aa).

Belongs to the bacterial ribosomal protein bL12 family. In terms of assembly, homodimer. Part of the ribosomal stalk of the 50S ribosomal subunit. Forms a multimeric L10(L12)X complex, where L10 forms an elongated spine to which 2 to 4 L12 dimers bind in a sequential fashion. Binds GTP-bound translation factors.

In terms of biological role, forms part of the ribosomal stalk which helps the ribosome interact with GTP-bound translation factors. Is thus essential for accurate translation. The chain is Large ribosomal subunit protein bL12 from Haemophilus influenzae (strain 86-028NP).